Here is a 550-residue protein sequence, read N- to C-terminus: Arginine--tRNA ligase (550 aa).

The short motif at 130-140 is the 'HIGH' region element; that stretch reads ANPTGPIHLGG.

Belongs to the class-I aminoacyl-tRNA synthetase family. Monomer.

Its subcellular location is the cytoplasm. The enzyme catalyses tRNA(Arg) + L-arginine + ATP = L-arginyl-tRNA(Arg) + AMP + diphosphate. The chain is Arginine--tRNA ligase from Corynebacterium diphtheriae (strain ATCC 700971 / NCTC 13129 / Biotype gravis).